Consider the following 83-residue polypeptide: Small ribosomal subunit protein bS20 (83 aa).

It belongs to the bacterial ribosomal protein bS20 family.

Functionally, binds directly to 16S ribosomal RNA. The protein is Small ribosomal subunit protein bS20 of Flavobacterium psychrophilum (strain ATCC 49511 / DSM 21280 / CIP 103535 / JIP02/86).